Reading from the N-terminus, the 180-residue chain is Mitochondrial inner membrane protease subunit 2 (180 aa).

The chain crosses the membrane as a helical span at residues 19-39 (LVGITLWVPVLMFVEQHVVSV). Residues serine 46 and lysine 92 contribute to the active site.

This sequence belongs to the peptidase S26 family. IMP2 subfamily. As to quaternary structure, heterodimer of 2 subunits, imp1 and imp2.

The protein localises to the mitochondrion inner membrane. Functionally, catalyzes the removal of transit peptides required for the targeting of proteins from the mitochondrial matrix, across the inner membrane, into the inter-membrane space. The sequence is that of Mitochondrial inner membrane protease subunit 2 from Schizosaccharomyces pombe (strain 972 / ATCC 24843) (Fission yeast).